The following is a 401-amino-acid chain: Pyruvyl transferase 1 (401 aa).

Positions 1 to 30 are cleaved as a signal peptide; it reads MFANINIRKSVWLFLLAAVSCTLFIYGVTR. The interval 38–64 is disordered; it reads NPSSLTSPSSSTSVDKKKPLFTKSPRN. Residues 39–50 are compositionally biased toward low complexity; that stretch reads PSSLTSPSSSTS.

It belongs to the polysaccharide pyruvyl transferase family.

In terms of biological role, involved in cell wall biogenesis. Has a role in the addition of Gal-beta1,3 moieties to galactomannans and their subsequent pyruvylation. The protein is Pyruvyl transferase 1 (pvg1) of Schizosaccharomyces pombe (strain 972 / ATCC 24843) (Fission yeast).